The chain runs to 250 residues: Sulfate transporter CysZ (250 aa).

A run of 4 helical transmembrane segments spans residues 27–47, 64–84, 150–170, and 210–230; these read FVVL…YYLF, FLSW…LATF, FLLL…WFLF, and MLVA…PVAV.

It belongs to the CysZ family.

Its subcellular location is the cell inner membrane. Functionally, high affinity, high specificity proton-dependent sulfate transporter, which mediates sulfate uptake. Provides the sulfur source for the cysteine synthesis pathway. This Vibrio cholerae serotype O1 (strain ATCC 39541 / Classical Ogawa 395 / O395) protein is Sulfate transporter CysZ.